A 304-amino-acid chain; its full sequence is D-alanine--D-alanine ligase (304 aa).

The ATP-grasp domain maps to K103–E301. An ATP-binding site is contributed by V132 to T187. Residues D254, E268, and N270 each contribute to the Mg(2+) site.

It belongs to the D-alanine--D-alanine ligase family. The cofactor is Mg(2+). Mn(2+) serves as cofactor.

Its subcellular location is the cytoplasm. It catalyses the reaction 2 D-alanine + ATP = D-alanyl-D-alanine + ADP + phosphate + H(+). Its pathway is cell wall biogenesis; peptidoglycan biosynthesis. Cell wall formation. This is D-alanine--D-alanine ligase from Xylella fastidiosa (strain Temecula1 / ATCC 700964).